The following is a 261-amino-acid chain: MAGDSETHLKDRAENGHAVRQPFLIGVSGGTASGKSSVCEKIMELLGQNKIDRHQRQVVILSQDSFYRELTPEQKAKAVKGQFNFDHPDAFDSELIMKTLRDIIQGKTVHIPVYDFVTHSRKDEFLTLYPADVVLFEGILMFYSQEIRDLFKMKLFVDTDPDTRLSRRVLRDISERGRELEQVLNQYITFVKPAFEEFCLPTKKYADVIIPRGADNLVAINLIVQHIQDILNGGFTKRQNGFQNGHGTPRQRRTSESSRPH.

29–37 (GGTASGKSS) serves as a coordination point for ATP. Residues Asp-86, Tyr-114, His-119, Arg-168, Arg-178, and Gln-186 each coordinate substrate. Asp-215 lines the ATP pocket. The segment at 238–261 (RQNGFQNGHGTPRQRRTSESSRPH) is disordered.

The protein belongs to the uridine kinase family. In terms of assembly, homotetramer.

It catalyses the reaction uridine + ATP = UMP + ADP + H(+). It carries out the reaction cytidine + ATP = CMP + ADP + H(+). It participates in pyrimidine metabolism; CTP biosynthesis via salvage pathway; CTP from cytidine: step 1/3. It functions in the pathway pyrimidine metabolism; UMP biosynthesis via salvage pathway; UMP from uridine: step 1/1. Its function is as follows. Phosphorylates uridine and cytidine to uridine monophosphate and cytidine monophosphate. Does not phosphorylate deoxyribonucleosides or purine ribonucleosides. Can use ATP or GTP as a phosphate donor. The chain is Uridine-cytidine kinase 2-B (uck2b) from Danio rerio (Zebrafish).